Here is a 123-residue protein sequence, read N- to C-terminus: Small ribosomal subunit protein uS12cz/uS12cy (123 aa).

Belongs to the universal ribosomal protein uS12 family. As to quaternary structure, part of the 30S ribosomal subunit.

It is found in the plastid. It localises to the chloroplast. With S4 and S5 plays an important role in translational accuracy. Located at the interface of the 30S and 50S subunits. This chain is Small ribosomal subunit protein uS12cz/uS12cy (rps12-A), found in Angiopteris evecta (Mule's foot fern).